A 202-amino-acid polypeptide reads, in one-letter code: Coiled-coil domain-containing protein 85B (202 aa).

At Met1 the chain carries N-acetylmethionine. 2 coiled-coil regions span residues 44-82 (RLMQEVNRQLQGHLGEIRELKQLNRRLQAENRELRDLCC) and 118-141 (QKLAELEGRQEELLRENLALKELC). Residues 152-162 (GGPGGAVGSGA) are compositionally biased toward gly residues. The disordered stretch occupies residues 152 to 202 (GGPGGAVGSGAGPTPELALPPCGPRDLGDGSSSTGSVGSPDQLPLACSPDD). Residues 180–190 (DGSSSTGSVGS) show a composition bias toward low complexity.

The protein belongs to the CCDC85 family. Interacts with CEBPB. May interact with CEBPD. Interacts with EURL. Interacts with MCRS1. Interacts with TCF7L2; competes with CTNNB1. Interacts with ANKRD26. Interacts with the beta-catenin family proteins ARVCF, CTNND1, CTNND2 and PKP4. Expressed in white and brown adipose tissue.

The protein localises to the nucleus. The protein resides in the cytoplasm. It localises to the cytoskeleton. It is found in the microtubule organizing center. Its subcellular location is the centrosome. The protein localises to the cell junction. The protein resides in the adherens junction. Functions as a transcriptional repressor. May inhibit the activity of CTNNB1 in a TP53-dependent manner and thus regulate cell growth. May function in adipocyte differentiation, negatively regulating mitotic clonal expansion. Plays a role in cell-cell adhesion and epithelium development through its interaction with proteins of the beta-catenin family. The polypeptide is Coiled-coil domain-containing protein 85B (Ccdc85b) (Mus musculus (Mouse)).